A 290-amino-acid polypeptide reads, in one-letter code: MKRIFLFIATNIAVIAVMSVVLSLLGVDRFISQAGLNLPMLLVFSLVVGFTGSIISLLISKPMAKWSTGARVIDAPSSSTELWLIDTVSKLAQRAGIKMPEVAVYDGEPNAFATGAFRDSALVAVSTGLLQSMTKDEVEAVLAHEVAHVANGDMVTMTLVQGVVNTFVVFLSRVVGYFVDRAISRDNNNSQGIGYTITVIVSQIVFGIAASVIVAWFSRHREFRADAGAAKLLGSPQPMMKALARLGGIEPTSLPEGLASLGINDKPGFAALFSSHPPIEDRIAALRSLQ.

2 helical membrane-spanning segments follow: residues 4 to 24 and 39 to 59; these read IFLF…VLSL and PMLL…SLLI. His144 serves as a coordination point for Zn(2+). Glu145 is a catalytic residue. His148 provides a ligand contact to Zn(2+). Transmembrane regions (helical) follow at residues 159 to 179 and 197 to 217; these read LVQG…GYFV and ITVI…VAWF. Position 222 (Glu222) interacts with Zn(2+).

It belongs to the peptidase M48B family. It depends on Zn(2+) as a cofactor.

The protein resides in the cell inner membrane. The chain is Protease HtpX homolog from Janthinobacterium sp. (strain Marseille) (Minibacterium massiliensis).